The primary structure comprises 433 residues: Adenylosuccinate synthetase (433 aa).

GTP is bound by residues 11–17 (GDEGKGK) and 39–41 (GHT). Asp-12 (proton acceptor) is an active-site residue. Asp-12 and Gly-39 together coordinate Mg(2+). Residues 12 to 15 (DEGK), 37 to 40 (NAGH), Thr-134, Arg-148, Asn-230, Thr-245, and Arg-309 contribute to the IMP site. His-40 serves as the catalytic Proton donor. A substrate-binding site is contributed by 305 to 311 (VTTGRKR). Residues Arg-311, 337 to 339 (KLD), and 419 to 421 (GTG) contribute to the GTP site.

Belongs to the adenylosuccinate synthetase family. In terms of assembly, homodimer. It depends on Mg(2+) as a cofactor.

It is found in the cytoplasm. The enzyme catalyses IMP + L-aspartate + GTP = N(6)-(1,2-dicarboxyethyl)-AMP + GDP + phosphate + 2 H(+). It functions in the pathway purine metabolism; AMP biosynthesis via de novo pathway; AMP from IMP: step 1/2. Plays an important role in the de novo pathway and in the salvage pathway of purine nucleotide biosynthesis. Catalyzes the first committed step in the biosynthesis of AMP from IMP. In Saccharomyces cerevisiae (strain AWRI1631) (Baker's yeast), this protein is Adenylosuccinate synthetase.